Reading from the N-terminus, the 245-residue chain is Ubiquinone biosynthesis O-methyltransferase (245 aa).

S-adenosyl-L-methionine contacts are provided by R44, G64, D85, and M129.

This sequence belongs to the methyltransferase superfamily. UbiG/COQ3 family.

The catalysed reaction is a 3-demethylubiquinol + S-adenosyl-L-methionine = a ubiquinol + S-adenosyl-L-homocysteine + H(+). It catalyses the reaction a 3-(all-trans-polyprenyl)benzene-1,2-diol + S-adenosyl-L-methionine = a 2-methoxy-6-(all-trans-polyprenyl)phenol + S-adenosyl-L-homocysteine + H(+). It participates in cofactor biosynthesis; ubiquinone biosynthesis. In terms of biological role, O-methyltransferase that catalyzes the 2 O-methylation steps in the ubiquinone biosynthetic pathway. This Proteus mirabilis (strain HI4320) protein is Ubiquinone biosynthesis O-methyltransferase.